A 164-amino-acid chain; its full sequence is CB1 cannabinoid receptor-interacting protein 1 (164 aa).

Belongs to the CNRIP family. In terms of assembly, interacts with the cannabinoid receptor CNR1 (via C-terminus). Does not interact with cannabinoid receptor CNR2.

Functionally, suppresses cannabinoid receptor CNR1-mediated tonic inhibition of voltage-gated calcium channels. In Bos taurus (Bovine), this protein is CB1 cannabinoid receptor-interacting protein 1 (CNRIP1).